The sequence spans 508 residues: NADH-quinone oxidoreductase subunit N 2 (508 aa).

The next 14 membrane-spanning stretches (helical) occupy residues 14-34 (SYVAILPHLIVTATLLVVIVL), 43-63 (SLVWVTLGGVVLAMLSIWYTA), 90-110 (FTFFMNGVLLGIAALVILLSA), 119-139 (GAHMEFYEIILAVTLGMMFMV), 144-164 (LLTIYIGLELTSISSYVLAGI), 179-199 (FLTGATASAVLLFGLSLIYGV), 223-243 (GPALTPLLVAGMAFLMVGFGF), 275-295 (GAAMAAILRVFVGGLGVAPFT), 298-318 (WALIWALAAAASMTVGNLVAL), 327-347 (MAYSSIAQAGYILVGVAASGL), 353-373 (ISSVLFYVMAYAVTNLGIFAV), 400-420 (AWALLLFFVSLIGIPPTVGFL), 433-455 (GYLWLAVLMAVNSVISVGYYYRV), and 473-493 (TGISATVLLSLLGVVALTIFA).

It belongs to the complex I subunit 2 family. As to quaternary structure, NDH-1 is composed of 14 different subunits. Subunits NuoA, H, J, K, L, M, N constitute the membrane sector of the complex.

The protein localises to the cell membrane. It catalyses the reaction a quinone + NADH + 5 H(+)(in) = a quinol + NAD(+) + 4 H(+)(out). Its function is as follows. NDH-1 shuttles electrons from NADH, via FMN and iron-sulfur (Fe-S) centers, to quinones in the respiratory chain. The immediate electron acceptor for the enzyme in this species is believed to be a menaquinone. Couples the redox reaction to proton translocation (for every two electrons transferred, four hydrogen ions are translocated across the cytoplasmic membrane), and thus conserves the redox energy in a proton gradient. In Symbiobacterium thermophilum (strain DSM 24528 / JCM 14929 / IAM 14863 / T), this protein is NADH-quinone oxidoreductase subunit N 2.